A 579-amino-acid chain; its full sequence is Adenine/guanine permease AZG1 (579 aa).

12 helical membrane-spanning segments follow: residues alanine 52–serine 72, leucine 131–asparagine 151, threonine 183–phenylalanine 203, alanine 221–valine 241, isoleucine 260–serine 280, methionine 292–valine 312, isoleucine 320–phenylalanine 340, phenylalanine 379–tyrosine 399, phenylalanine 414–leucine 434, alanine 459–isoleucine 479, proline 480–threonine 500, and phenylalanine 514–isoleucine 534.

The protein belongs to the nucleobase:cation symporter-2 (NCS2) (TC 2.A.40) family. Azg-like subfamily.

It localises to the membrane. Its function is as follows. Transports natural purines (adenine and guanine) as well as purine analogs. Confers sensitivity to 8-azaadenine and 8-azaguanine (8-azg). In Arabidopsis thaliana (Mouse-ear cress), this protein is Adenine/guanine permease AZG1 (AZG1).